The primary structure comprises 137 residues: Nucleoside diphosphate kinase (137 aa).

6 residues coordinate ATP: K10, F59, R87, T93, R104, and N114. The Pros-phosphohistidine intermediate role is filled by H117.

It belongs to the NDK family. As to quaternary structure, homotetramer. Mg(2+) is required as a cofactor.

The protein resides in the cytoplasm. The catalysed reaction is a 2'-deoxyribonucleoside 5'-diphosphate + ATP = a 2'-deoxyribonucleoside 5'-triphosphate + ADP. The enzyme catalyses a ribonucleoside 5'-diphosphate + ATP = a ribonucleoside 5'-triphosphate + ADP. Major role in the synthesis of nucleoside triphosphates other than ATP. The ATP gamma phosphate is transferred to the NDP beta phosphate via a ping-pong mechanism, using a phosphorylated active-site intermediate. The polypeptide is Nucleoside diphosphate kinase (Streptomyces avermitilis (strain ATCC 31267 / DSM 46492 / JCM 5070 / NBRC 14893 / NCIMB 12804 / NRRL 8165 / MA-4680)).